Here is a 256-residue protein sequence, read N- to C-terminus: Phosphoribosylaminoimidazole-succinocarboxamide synthase (256 aa).

The interval 234 to 256 (KPQKPAAAKKKAPVSKKTVKRTR) is disordered. Basic residues predominate over residues 240-256 (AAKKKAPVSKKTVKRTR).

This sequence belongs to the SAICAR synthetase family.

The enzyme catalyses 5-amino-1-(5-phospho-D-ribosyl)imidazole-4-carboxylate + L-aspartate + ATP = (2S)-2-[5-amino-1-(5-phospho-beta-D-ribosyl)imidazole-4-carboxamido]succinate + ADP + phosphate + 2 H(+). The protein operates within purine metabolism; IMP biosynthesis via de novo pathway; 5-amino-1-(5-phospho-D-ribosyl)imidazole-4-carboxamide from 5-amino-1-(5-phospho-D-ribosyl)imidazole-4-carboxylate: step 1/2. The sequence is that of Phosphoribosylaminoimidazole-succinocarboxamide synthase from Methanoregula boonei (strain DSM 21154 / JCM 14090 / 6A8).